Consider the following 452-residue polypeptide: UDP-glycosyltransferase 76E4 (452 aa).

UDP-alpha-D-glucose is bound by residues T274, 333–335 (APQ), 350–358 (HCGWNSTLE), and 372–375 (QGEQ).

Belongs to the UDP-glycosyltransferase family.

The chain is UDP-glycosyltransferase 76E4 (UGT76E4) from Arabidopsis thaliana (Mouse-ear cress).